The primary structure comprises 505 residues: Catalase (505 aa).

Residues 1-25 form a disordered region; it reads MSKQDGKLTGLFGAPVSDRENSMTA. Residues His56 and Asn129 contribute to the active site. Tyr339 is a binding site for heme.

This sequence belongs to the catalase family. In terms of assembly, homodimer. Heme is required as a cofactor.

The catalysed reaction is 2 H2O2 = O2 + 2 H2O. Decomposes hydrogen peroxide into water and oxygen; serves to protect cells from the toxic effects of hydrogen peroxide. The chain is Catalase (katA) from Staphylococcus warneri.